Here is a 593-residue protein sequence, read N- to C-terminus: Elongation factor 4 (593 aa).

A tr-type G domain is found at K2–T181. GTP-binding positions include D14–T19 and N128–D131.

Belongs to the TRAFAC class translation factor GTPase superfamily. Classic translation factor GTPase family. LepA subfamily.

It is found in the cell inner membrane. The catalysed reaction is GTP + H2O = GDP + phosphate + H(+). Required for accurate and efficient protein synthesis under certain stress conditions. May act as a fidelity factor of the translation reaction, by catalyzing a one-codon backward translocation of tRNAs on improperly translocated ribosomes. Back-translocation proceeds from a post-translocation (POST) complex to a pre-translocation (PRE) complex, thus giving elongation factor G a second chance to translocate the tRNAs correctly. Binds to ribosomes in a GTP-dependent manner. The chain is Elongation factor 4 from Phocaeicola vulgatus (strain ATCC 8482 / DSM 1447 / JCM 5826 / CCUG 4940 / NBRC 14291 / NCTC 11154) (Bacteroides vulgatus).